The chain runs to 226 residues: ATP synthase F(0) complex subunit a (226 aa).

Helical transmembrane passes span 5–25 (LFAPFMIPVMLGIPITTLIII), 68–88 (WSLMLISLFLFIASTNLLGML), 97–117 (QLSMNVGMAIPLWAGTVTTGF), 136–156 (FLIPMLVIIETISLFIQPVAW), and 189–209 (AFITFTILALLTILEFAVALI).

Belongs to the ATPase A chain family. In terms of assembly, component of the ATP synthase complex composed at least of ATP5F1A/subunit alpha, ATP5F1B/subunit beta, ATP5MC1/subunit c (homooctomer), MT-ATP6/subunit a, MT-ATP8/subunit 8, ATP5ME/subunit e, ATP5MF/subunit f, ATP5MG/subunit g, ATP5MK/subunit k, ATP5MJ/subunit j, ATP5F1C/subunit gamma, ATP5F1D/subunit delta, ATP5F1E/subunit epsilon, ATP5PF/subunit F6, ATP5PB/subunit b, ATP5PD/subunit d, ATP5PO/subunit OSCP. ATP synthase complex consists of a soluble F(1) head domain (subunits alpha(3) and beta(3)) - the catalytic core - and a membrane F(0) domain - the membrane proton channel (subunits c, a, 8, e, f, g, k and j). These two domains are linked by a central stalk (subunits gamma, delta, and epsilon) rotating inside the F1 region and a stationary peripheral stalk (subunits F6, b, d, and OSCP). Interacts with DNAJC30; interaction is direct.

It localises to the mitochondrion inner membrane. The enzyme catalyses H(+)(in) = H(+)(out). Its function is as follows. Subunit a, of the mitochondrial membrane ATP synthase complex (F(1)F(0) ATP synthase or Complex V) that produces ATP from ADP in the presence of a proton gradient across the membrane which is generated by electron transport complexes of the respiratory chain. ATP synthase complex consist of a soluble F(1) head domain - the catalytic core - and a membrane F(1) domain - the membrane proton channel. These two domains are linked by a central stalk rotating inside the F(1) region and a stationary peripheral stalk. During catalysis, ATP synthesis in the catalytic domain of F(1) is coupled via a rotary mechanism of the central stalk subunits to proton translocation. With the subunit c (ATP5MC1), forms the proton-conducting channel in the F(0) domain, that contains two crucial half-channels (inlet and outlet) that facilitate proton movement from the mitochondrial intermembrane space (IMS) into the matrix. Protons are taken up via the inlet half-channel and released through the outlet half-channel, following a Grotthuss mechanism. The sequence is that of ATP synthase F(0) complex subunit a from Balaenoptera physalus (Fin whale).